The sequence spans 296 residues: Peptide transport system permease protein SapC (296 aa).

Residues M1–P28 lie on the Cytoplasmic side of the membrane. A helical transmembrane segment spans residues A29–I49. Over A50–T98 the chain is Periplasmic. A helical membrane pass occupies residues V99–V119. An ABC transmembrane type-1 domain is found at V99–G284. At A120–H133 the chain is on the cytoplasmic side. Residues I134–A154 traverse the membrane as a helical segment. Over G155 to D196 the chain is Periplasmic. Residues G197 to V217 form a helical membrane-spanning segment. Topologically, residues T218–R222 are cytoplasmic. The helical transmembrane segment at A223 to L243 threads the bilayer. Topologically, residues P244 to E257 are periplasmic. The chain crosses the membrane as a helical span at residues L258 to L278. Residues L279 to E296 are Cytoplasmic-facing.

The protein belongs to the binding-protein-dependent transport system permease family. OppBC subfamily.

Its subcellular location is the cell inner membrane. In terms of biological role, involved in a peptide intake transport system that plays a role in the resistance to antimicrobial peptides. This is Peptide transport system permease protein SapC (sapC) from Salmonella typhi.